Reading from the N-terminus, the 260-residue chain is Thiazole synthase (260 aa).

The Schiff-base intermediate with DXP role is filled by lysine 100. 1-deoxy-D-xylulose 5-phosphate contacts are provided by residues glycine 161, 187–188 (AG), and 209–210 (NT).

This sequence belongs to the ThiG family. In terms of assembly, homotetramer. Forms heterodimers with either ThiH or ThiS.

It localises to the cytoplasm. It catalyses the reaction [ThiS sulfur-carrier protein]-C-terminal-Gly-aminoethanethioate + 2-iminoacetate + 1-deoxy-D-xylulose 5-phosphate = [ThiS sulfur-carrier protein]-C-terminal Gly-Gly + 2-[(2R,5Z)-2-carboxy-4-methylthiazol-5(2H)-ylidene]ethyl phosphate + 2 H2O + H(+). It participates in cofactor biosynthesis; thiamine diphosphate biosynthesis. Functionally, catalyzes the rearrangement of 1-deoxy-D-xylulose 5-phosphate (DXP) to produce the thiazole phosphate moiety of thiamine. Sulfur is provided by the thiocarboxylate moiety of the carrier protein ThiS. In vitro, sulfur can be provided by H(2)S. This chain is Thiazole synthase, found in Dechloromonas aromatica (strain RCB).